We begin with the raw amino-acid sequence, 303 residues long: Holdfast attachment protein D (303 aa).

A compositionally biased stretch (polar residues) spans 266–281; that stretch reads SARSTMSGPKSCSTTF. The interval 266–303 is disordered; that stretch reads SARSTMSGPKSCSTTFRPIRAAASRRPPASAGTRAMTR. The segment covering 282–303 has biased composition (low complexity); it reads RPIRAAASRRPPASAGTRAMTR.

Its subcellular location is the cell outer membrane. In terms of biological role, involved in attachment of the holdfast to the cell. The holdfast is a structure that allows the bacteria to firmly adhere to surfaces. The polypeptide is Holdfast attachment protein D (hfaD) (Caulobacter vibrioides (strain ATCC 19089 / CIP 103742 / CB 15) (Caulobacter crescentus)).